We begin with the raw amino-acid sequence, 308 residues long: Oxygen-dependent coproporphyrinogen-III oxidase (308 aa).

S100 lines the substrate pocket. Positions 104 and 114 each coordinate a divalent metal cation. H114 (proton donor) is an active-site residue. 116-118 (NFR) lines the substrate pocket. The a divalent metal cation site is built by H153 and H183. The tract at residues 248–283 (YVEFNLVFDRGTIFGLQSGGRTESILSSMPPMATWK) is important for dimerization. A substrate-binding site is contributed by 266–268 (GGR).

This sequence belongs to the aerobic coproporphyrinogen-III oxidase family. In terms of assembly, homodimer. Requires a divalent metal cation as cofactor.

It localises to the cytoplasm. It carries out the reaction coproporphyrinogen III + O2 + 2 H(+) = protoporphyrinogen IX + 2 CO2 + 2 H2O. It participates in porphyrin-containing compound metabolism; protoporphyrin-IX biosynthesis; protoporphyrinogen-IX from coproporphyrinogen-III (O2 route): step 1/1. In terms of biological role, involved in the heme biosynthesis. Catalyzes the aerobic oxidative decarboxylation of propionate groups of rings A and B of coproporphyrinogen-III to yield the vinyl groups in protoporphyrinogen-IX. The chain is Oxygen-dependent coproporphyrinogen-III oxidase from Francisella philomiragia subsp. philomiragia (strain ATCC 25017 / CCUG 19701 / FSC 153 / O#319-036).